The primary structure comprises 304 residues: WW domain-binding protein 1 (304 aa).

The disordered stretch occupies residues 1-26 (MARASSRNSSEEAWGSLQAPQQQQSP). 2 consecutive short sequence motifs (PPxY motif) follow at residues 159–162 (PPAY) and 172–176 (PPPPY). Disordered regions lie at residues 206–235 (TNVEGVSSQQSALPHQEGEPRAGLSPVHIP) and 252–304 (CPCP…GDIP). Residues 209 to 218 (EGVSSQQSAL) show a composition bias toward polar residues.

In terms of assembly, binds to the WW domain of YAP1, WWP1 and WWP2. Interacts with WWOX. Interacts with NEDD4.

The polypeptide is WW domain-binding protein 1 (Wbp1) (Mus musculus (Mouse)).